We begin with the raw amino-acid sequence, 51 residues long: Putative protein LomR (51 aa).

It belongs to the outer membrane OOP (TC 1.B.6) superfamily. Ail family.

This is Putative protein LomR (lomR) from Escherichia coli (strain K12).